We begin with the raw amino-acid sequence, 404 residues long: Cysteine desulfurase IscS (404 aa).

Residues 75–76, Asn155, Gln183, and 203–205 each bind pyridoxal 5'-phosphate; these read AT and SAH. Lys206 bears the N6-(pyridoxal phosphate)lysine mark. Thr243 contacts pyridoxal 5'-phosphate. Residue Cys328 is the Cysteine persulfide intermediate of the active site. Cys328 is a binding site for [2Fe-2S] cluster.

This sequence belongs to the class-V pyridoxal-phosphate-dependent aminotransferase family. NifS/IscS subfamily. Homodimer. Forms a heterotetramer with IscU, interacts with other sulfur acceptors. Pyridoxal 5'-phosphate serves as cofactor.

It localises to the cytoplasm. It catalyses the reaction (sulfur carrier)-H + L-cysteine = (sulfur carrier)-SH + L-alanine. It participates in cofactor biosynthesis; iron-sulfur cluster biosynthesis. Its function is as follows. Master enzyme that delivers sulfur to a number of partners involved in Fe-S cluster assembly, tRNA modification or cofactor biosynthesis. Catalyzes the removal of elemental sulfur atoms from cysteine to produce alanine. Functions as a sulfur delivery protein for Fe-S cluster synthesis onto IscU, an Fe-S scaffold assembly protein, as well as other S acceptor proteins. This chain is Cysteine desulfurase IscS, found in Shewanella woodyi (strain ATCC 51908 / MS32).